Here is a 310-residue protein sequence, read N- to C-terminus: tRNA uridine(34) hydroxylase (310 aa).

The Rhodanese domain maps to 134–232; it reads DDPDTLLIDT…YFEEVSQTES (99 aa). The active-site Cysteine persulfide intermediate is the C192.

It belongs to the TrhO family.

It carries out the reaction uridine(34) in tRNA + AH2 + O2 = 5-hydroxyuridine(34) in tRNA + A + H2O. Catalyzes oxygen-dependent 5-hydroxyuridine (ho5U) modification at position 34 in tRNAs. This Prochlorococcus marinus (strain MIT 9313) protein is tRNA uridine(34) hydroxylase.